Here is a 302-residue protein sequence, read N- to C-terminus: Heat stress transcription factor B-1 (302 aa).

Residues 1–15 (MAAAEAAAAVGKQQQ) are compositionally biased toward low complexity. 2 disordered regions span residues 1-33 (MAAAEAAAAVGKQQQKGGGGRGGGGGGPAPFLT) and 116-184 (GIRR…RKDN). Residues 16–28 (KGGGGRGGGGGGP) show a composition bias toward gly residues. The segment covering 123–133 (TTPQSSKSCGS) has biased composition (polar residues). Residues 139–150 (FPPPLPPLPPEP) show a composition bias toward pro residues. The segment covering 151-172 (SATTSSGNDRSSSSASSPPRAD) has biased composition (low complexity). A coiled-coil region spans residues 170 to 202 (RADITSENEQLRKDNQTLTMELARARRHCEELL). A hydrophobic repeat HR-A/B region spans residues 180–209 (LRKDNQTLTMELARARRHCEELLGFLSRFL). A Nuclear export signal motif is present at residues 211–218 (VRQLDLRL). Residues 263 to 267 (RKRAR) carry the Nuclear localization signal motif.

Belongs to the HSF family. Class B subfamily. As to quaternary structure, homotrimer. Exhibits temperature-dependent phosphorylation.

The protein resides in the cytoplasm. It localises to the nucleus. Transcriptional regulator that specifically binds DNA of heat shock promoter elements (HSE). This chain is Heat stress transcription factor B-1 (HSFB1), found in Oryza sativa subsp. japonica (Rice).